Consider the following 103-residue polypeptide: MNEIGLGHFLSVAAVLFTLGTLGIFLNRKNVIIILMSIELMLLAVNINLVAFSIYLNDIVGQVFALLVLTVAAAEAAIGLAVLVVFFRNRGTIAVQDINLMKG.

3 helical membrane passes run 6–26 (LGHFLSVAAVLFTLGTLGIFL), 32–52 (IIILMSIELMLLAVNINLVAF), and 67–87 (LVLTVAAAEAAIGLAVLVVFF).

This sequence belongs to the complex I subunit 4L family. In terms of assembly, NDH-1 is composed of 14 different subunits. Subunits NuoA, H, J, K, L, M, N constitute the membrane sector of the complex.

It is found in the cell inner membrane. The catalysed reaction is a quinone + NADH + 5 H(+)(in) = a quinol + NAD(+) + 4 H(+)(out). NDH-1 shuttles electrons from NADH, via FMN and iron-sulfur (Fe-S) centers, to quinones in the respiratory chain. The immediate electron acceptor for the enzyme in this species is believed to be ubiquinone. Couples the redox reaction to proton translocation (for every two electrons transferred, four hydrogen ions are translocated across the cytoplasmic membrane), and thus conserves the redox energy in a proton gradient. The polypeptide is NADH-quinone oxidoreductase subunit K 1 (Rhodopseudomonas palustris (strain ATCC BAA-98 / CGA009)).